Consider the following 354-residue polypeptide: Ubiquitin-conjugating enzyme E2 Z (354 aa).

A disordered region spans residues 1–21 (MAESPTEEAATAGAGAAGPGA). Positions 99 to 253 (QCLLRIKRDI…IRHETIRVAV (155 aa)) constitute a UBC core domain. Residue Cys188 is the Glycyl thioester intermediate of the active site. The segment at 332 to 354 (NAEMDSDSSSSGTETDLHGSLRV) is disordered. Residue Ser337 is modified to Phosphoserine.

The protein belongs to the ubiquitin-conjugating enzyme family. In terms of tissue distribution, widely expressed. Highly in placenta, pancreas, spleen and testis.

It is found in the cytoplasm. The protein resides in the nucleus. It carries out the reaction S-ubiquitinyl-[E1 ubiquitin-activating enzyme]-L-cysteine + [E2 ubiquitin-conjugating enzyme]-L-cysteine = [E1 ubiquitin-activating enzyme]-L-cysteine + S-ubiquitinyl-[E2 ubiquitin-conjugating enzyme]-L-cysteine.. It functions in the pathway protein modification; protein ubiquitination. Functionally, catalyzes the covalent attachment of ubiquitin to other proteins. Specific substrate for UBA6, not charged with ubiquitin by UBE1. May be involved in apoptosis regulation. This is Ubiquitin-conjugating enzyme E2 Z (UBE2Z) from Homo sapiens (Human).